The following is a 209-amino-acid chain: Urease accessory protein UreG (209 aa).

10 to 17 (GPVGSGKT) contributes to the GTP binding site.

Belongs to the SIMIBI class G3E GTPase family. UreG subfamily. In terms of assembly, homodimer. UreD, UreF and UreG form a complex that acts as a GTP-hydrolysis-dependent molecular chaperone, activating the urease apoprotein by helping to assemble the nickel containing metallocenter of UreC. The UreE protein probably delivers the nickel.

The protein localises to the cytoplasm. Functionally, facilitates the functional incorporation of the urease nickel metallocenter. This process requires GTP hydrolysis, probably effectuated by UreG. In Lysinibacillus sphaericus (strain C3-41), this protein is Urease accessory protein UreG.